Reading from the N-terminus, the 934-residue chain is Protein unc-45 homolog B (934 aa).

TPR repeat units follow at residues 9–42 (SVQL…CKKE), 48–81 (AVIY…DAAD), and 83–115 (KALY…EPKN). ARM repeat units lie at residues 174 to 213 (DAGA…GMCT), 216 to 255 (RARA…CVND), and 753 to 792 (DKLR…NLVC).

In terms of assembly, interacts with apobec2a, apobec2b, hsp90a.1, hsp90a.2, hsp90ab1 and myosin. In terms of tissue distribution, expressed in striated muscle tissue including somites, heart and craniofacial muscle. Detected in mesoderm adjacent to the dorsal midline during the late gastrula stages and in somitic mesoderm during development of trunk skeletal muscle. Also expressed in cranial skeletal muscle and in cardiac and smooth muscle. Detected in somitic muscle and heart primordium of 24 hour embryos. At later stages, expressed in muscles of pectoral fins, jaw, branchial arches and eye.

Its subcellular location is the cytoplasm. The protein localises to the myofibril. The protein resides in the sarcomere. It is found in the z line. It localises to the a band. Its subcellular location is the perinuclear region. Acts as a co-chaperone for HSP90 and is required for proper folding of the myosin motor domain. Plays a role in sarcomere formation during muscle cell development. Required for myoseptal integrity, myofiber attachment, motility and craniofacial development. Is necessary for normal early lens development. The chain is Protein unc-45 homolog B from Danio rerio (Zebrafish).